A 116-amino-acid polypeptide reads, in one-letter code: Large ribosomal subunit protein uL18 (116 aa).

This sequence belongs to the universal ribosomal protein uL18 family. In terms of assembly, part of the 50S ribosomal subunit; part of the 5S rRNA/L5/L18/L25 subcomplex. Contacts the 5S and 23S rRNAs.

In terms of biological role, this is one of the proteins that bind and probably mediate the attachment of the 5S RNA into the large ribosomal subunit, where it forms part of the central protuberance. In Shewanella sediminis (strain HAW-EB3), this protein is Large ribosomal subunit protein uL18.